A 583-amino-acid polypeptide reads, in one-letter code: Cationic amino acid transporter 6, chloroplastic (583 aa).

A chloroplast-targeting transit peptide spans 1–50 (MEVQSSSNNGGHSSFSSLRVYLNSLSATPSRLSRRAISVSTSSDEMSRVR). 14 helical membrane passes run 63 to 83 (WYDL…FVTT), 91 to 111 (AGPS…LSAF), 132 to 152 (ITFG…DYVM), 186 to 206 (GFNE…VIIC), 216 to 236 (NMIM…MGFI), 255 to 275 (FFPF…LSYI), 294 to 314 (IPVG…LMAV), 347 to 367 (VVGI…MLGQ), 397 to 417 (ASTF…LNVL), 418 to 438 (LNLV…ALIF), 450 to 470 (WPTL…TLIW), 481 to 501 (FMLG…QCVV), 509 to 529 (LWGV…NIFL), and 541 to 561 (FGFF…HASS).

It belongs to the amino acid-polyamine-organocation (APC) superfamily. Cationic amino acid transporter (CAT) (TC 2.A.3.3) family. As to expression, expressed in roots, stems, flowers, and leaves.

The protein localises to the plastid. It localises to the chloroplast membrane. In terms of biological role, permease involved in the transport of the cationic neutral or acidic amino acids. The sequence is that of Cationic amino acid transporter 6, chloroplastic (CAT6) from Arabidopsis thaliana (Mouse-ear cress).